Reading from the N-terminus, the 272-residue chain is SKA complex subunit 1 homolog (272 aa).

Positions 48–75 (ALSSMELQVQSIKDRLREETEAIPKAKK) form a coiled coil.

It belongs to the SKA1 family.

This is SKA complex subunit 1 homolog from Arabidopsis thaliana (Mouse-ear cress).